Here is a 693-residue protein sequence, read N- to C-terminus: Homeobox protein caupolican (693 aa).

6 disordered regions span residues 20 to 104 (TANT…PSRG), 288 to 331 (NKMT…PGNQ), 387 to 453 (AQSH…DCGI), 480 to 538 (YLGQ…PLSM), 561 to 627 (MHLP…SMHS), and 648 to 693 (YGHG…RSGS). The segment covering 41 to 59 (ASLSPSGGSTATGLTAGPL) has biased composition (low complexity). A DNA-binding region (homeobox; TALE-type) is located at residues 226-288 (LAARRKNATR…NARRRLKKEN (63 aa)). Composition is skewed to basic and acidic residues over residues 288–298 (NKMTWEPKNKT) and 308–317 (DDEKEKDAGD). Low complexity-rich tracts occupy residues 397-419 (HPQQ…QLQH) and 493-515 (QQLP…QQQQ). Over residues 516-527 (QHHHHPHHHHPH) the composition is skewed to basic residues. Over residues 609–627 (SSGGSSSSSGSSHSSSMHS) the composition is skewed to low complexity. Residues 651 to 675 (GHSHGHGHGHGHGLGHGHGLGHGHG) show a composition bias toward basic residues.

The protein belongs to the TALE/IRO homeobox family.

The protein localises to the nucleus. Controls proneural and vein forming genes. Positive transcriptional controller of ac-sc (achaete-scute). May act as an activator that interacts with the transcriptional complex assembled on the ac and sc promoters and participates in transcription initiation. In Drosophila melanogaster (Fruit fly), this protein is Homeobox protein caupolican (caup).